We begin with the raw amino-acid sequence, 466 residues long: ATP synthase subunit beta (466 aa).

Position 152–159 (152–159 (GGAGVGKT)) interacts with ATP.

The protein belongs to the ATPase alpha/beta chains family. As to quaternary structure, F-type ATPases have 2 components, CF(1) - the catalytic core - and CF(0) - the membrane proton channel. CF(1) has five subunits: alpha(3), beta(3), gamma(1), delta(1), epsilon(1). CF(0) has three main subunits: a(1), b(2) and c(9-12). The alpha and beta chains form an alternating ring which encloses part of the gamma chain. CF(1) is attached to CF(0) by a central stalk formed by the gamma and epsilon chains, while a peripheral stalk is formed by the delta and b chains.

It is found in the cell inner membrane. It catalyses the reaction ATP + H2O + 4 H(+)(in) = ADP + phosphate + 5 H(+)(out). Functionally, produces ATP from ADP in the presence of a proton gradient across the membrane. The catalytic sites are hosted primarily by the beta subunits. The sequence is that of ATP synthase subunit beta from Helicobacter acinonychis (strain Sheeba).